A 307-amino-acid polypeptide reads, in one-letter code: Solute carrier family 25 member 53 (307 aa).

The segment at 1–23 (MGEQNHSPGKELQHRTRAEAPGK) is disordered. A compositionally biased stretch (basic and acidic residues) spans 8–22 (PGKELQHRTRAEAPG). 3 Solcar repeats span residues 25–105 (SWHS…LLCF), 112–202 (HTLG…IQDG), and 210–302 (HWVP…HSRK). 6 helical membrane-spanning segments follow: residues 31–51 (YALGAVSNFMSTFLTFPIYKV), 82–102 (YPPLLSKTLQGTLLFGTYDSL), 112–132 (HTLGHRWAAGLMSGVVEAVAL), 181–201 (VLARNSLGSALYFSFKDPIQD), 215–235 (LVSGSVNGTITCLVLYPLIVL), and 269–290 (IYRGGSLVILRSSVTWGLTTAI).

It belongs to the mitochondrial carrier (TC 2.A.29) family.

It is found in the mitochondrion inner membrane. In Homo sapiens (Human), this protein is Solute carrier family 25 member 53 (SLC25A53).